We begin with the raw amino-acid sequence, 37 residues long: Large ribosomal subunit protein bL36 (37 aa).

It belongs to the bacterial ribosomal protein bL36 family.

The chain is Large ribosomal subunit protein bL36 from Halorhodospira halophila (strain DSM 244 / SL1) (Ectothiorhodospira halophila (strain DSM 244 / SL1)).